We begin with the raw amino-acid sequence, 263 residues long: MTSPIPTPTKFDDKFGSISKSYKNFRPTYNDELYSIIDSHCDEKRDLAIDIGAGSGQATVRLAKYFKKVIGFEPSQGQIENAEKTDNVEYRLSAAEKIDLPSGSVDLITVAQAAHWFNLPVFYEESKRLLRENGSLIIWSYGLMKITNNNDAQVVHEKHYYETIGDQYWAPERKYIDDEYVDIKPSFENTTRKTISLPKSMSINDMIGYYSSWSGYAAFIKAGNKDVLPEIKETLLKAYKTTDGDSKLIDVNFPVYMILSKKE.

The protein belongs to the methyltransferase superfamily.

In Dictyostelium discoideum (Social amoeba), this protein is Putative methyltransferase DDB_G0268948.